The primary structure comprises 187 residues: High-affinity copper transporter ctrA2 (187 aa).

A run of 2 helical transmembrane segments spans residues 44–64 (YAGT…LVAF) and 137–157 (AAIF…VMTM).

It belongs to the copper transporter (Ctr) (TC 1.A.56) family. SLC31A subfamily.

The protein resides in the cell membrane. It carries out the reaction Cu(2+)(in) = Cu(2+)(out). Its function is as follows. High-affinity copper transporter of plasma membrane that mediates copper uptake under low copper conditions. The mechanism driving the transmembrane transport of copper has still to be determined. Acts as a potential virulence factor. This chain is High-affinity copper transporter ctrA2, found in Aspergillus fumigatus (strain ATCC MYA-4609 / CBS 101355 / FGSC A1100 / Af293) (Neosartorya fumigata).